A 129-amino-acid polypeptide reads, in one-letter code: NADH-quinone oxidoreductase subunit K 2 (129 aa).

A run of 3 helical transmembrane segments spans residues 3 to 23 (LAYPAVLSALLFSTGLYGVLA), 28 to 48 (ILVLMSVELMLNAVNLNLVAF), and 68 to 88 (LFTIAIAAAEIGIGLAIVLAV). Residues 98–129 (DKLRDTAEGPEPDGPGTDGSAPTAAEKAEATA) are disordered. Positions 111 to 122 (GPGTDGSAPTAA) are enriched in low complexity.

It belongs to the complex I subunit 4L family. In terms of assembly, NDH-1 is composed of 14 different subunits. Subunits NuoA, H, J, K, L, M, N constitute the membrane sector of the complex.

The protein resides in the cell membrane. It catalyses the reaction a quinone + NADH + 5 H(+)(in) = a quinol + NAD(+) + 4 H(+)(out). NDH-1 shuttles electrons from NADH, via FMN and iron-sulfur (Fe-S) centers, to quinones in the respiratory chain. The immediate electron acceptor for the enzyme in this species is believed to be a menaquinone. Couples the redox reaction to proton translocation (for every two electrons transferred, four hydrogen ions are translocated across the cytoplasmic membrane), and thus conserves the redox energy in a proton gradient. The protein is NADH-quinone oxidoreductase subunit K 2 of Streptomyces avermitilis (strain ATCC 31267 / DSM 46492 / JCM 5070 / NBRC 14893 / NCIMB 12804 / NRRL 8165 / MA-4680).